A 451-amino-acid chain; its full sequence is uncharacterized protein (451 aa).

It to ORF5 in pFZ1.

This is an uncharacterized protein from Methanothermobacter thermautotrophicus (Methanobacterium thermoformicicum).